We begin with the raw amino-acid sequence, 329 residues long: DNA-directed RNA polymerase subunit alpha (329 aa).

The interval methionine 1–arginine 235 is alpha N-terminal domain (alpha-NTD). The tract at residues phenylalanine 249–glutamate 329 is alpha C-terminal domain (alpha-CTD).

This sequence belongs to the RNA polymerase alpha chain family. Homodimer. The RNAP catalytic core consists of 2 alpha, 1 beta, 1 beta' and 1 omega subunit. When a sigma factor is associated with the core the holoenzyme is formed, which can initiate transcription.

It catalyses the reaction RNA(n) + a ribonucleoside 5'-triphosphate = RNA(n+1) + diphosphate. Functionally, DNA-dependent RNA polymerase catalyzes the transcription of DNA into RNA using the four ribonucleoside triphosphates as substrates. The polypeptide is DNA-directed RNA polymerase subunit alpha (Sodalis glossinidius (strain morsitans)).